A 312-amino-acid polypeptide reads, in one-letter code: Tyrosine recombinase XerC (312 aa).

A Core-binding (CB) domain is found at 10–101; that stretch reads PDLQAARESW…GIRSLLRFLE (92 aa). The Tyr recombinase domain maps to 122–306; that stretch reads SLPKPLTASD…DTARLLEIYE (185 aa). Residues Arg-165, Lys-190, His-258, Arg-261, and His-284 contribute to the active site. The O-(3'-phospho-DNA)-tyrosine intermediate role is filled by Tyr-293.

It belongs to the 'phage' integrase family. XerC subfamily. As to quaternary structure, forms a cyclic heterotetrameric complex composed of two molecules of XerC and two molecules of XerD.

It localises to the cytoplasm. Functionally, site-specific tyrosine recombinase, which acts by catalyzing the cutting and rejoining of the recombining DNA molecules. The XerC-XerD complex is essential to convert dimers of the bacterial chromosome into monomers to permit their segregation at cell division. It also contributes to the segregational stability of plasmids. This Mesorhizobium japonicum (strain LMG 29417 / CECT 9101 / MAFF 303099) (Mesorhizobium loti (strain MAFF 303099)) protein is Tyrosine recombinase XerC.